Consider the following 375-residue polypeptide: Histidine biosynthesis bifunctional protein HisB (375 aa).

The segment at 1–168 (MTPILFVDRD…GIAHELADAP (168 aa)) is histidinol-phosphatase. The Nucleophile role is filled by Asp-8. The Mg(2+) site is built by Asp-8, Asp-10, and Asp-128. The active-site Proton donor is Asp-10. Residues 169 to 375 (RRAVVQRNTK…TALPSTKGAL (207 aa)) are imidazoleglycerol-phosphate dehydratase.

In the N-terminal section; belongs to the histidinol-phosphatase family. It in the C-terminal section; belongs to the imidazoleglycerol-phosphate dehydratase family. It depends on Mg(2+) as a cofactor.

Its subcellular location is the cytoplasm. The enzyme catalyses D-erythro-1-(imidazol-4-yl)glycerol 3-phosphate = 3-(imidazol-4-yl)-2-oxopropyl phosphate + H2O. The catalysed reaction is L-histidinol phosphate + H2O = L-histidinol + phosphate. It participates in amino-acid biosynthesis; L-histidine biosynthesis; L-histidine from 5-phospho-alpha-D-ribose 1-diphosphate: step 6/9. The protein operates within amino-acid biosynthesis; L-histidine biosynthesis; L-histidine from 5-phospho-alpha-D-ribose 1-diphosphate: step 8/9. This Xanthomonas campestris pv. campestris (strain 8004) protein is Histidine biosynthesis bifunctional protein HisB.